The sequence spans 396 residues: MAKEKFDRSKTHANIGTIGHVDHGKTTLTAAITTVLAKRSGKGVAMAYDAIDGAPEERERGITISTAHVEYETDNRHYAHVDCPGHADYVKNMITGAAQMDGGILVVSAADGPMPQTREHILLSRQVGVPYLVVFLNKCDMVDDEELLELVEMEVRDLLSEYDFPGDDVPVIRGSALKALEGDAEWEEKIIELMAAVDDYIPTPERDTEKPFMMPVEDVFSITGRGTVATGRVERGQLNVGDEVEIIGLEEEAKKTTVTGVEMFRKLLDYAEAGDNIGALLRGVSREEVQRGQVLAKPGTITPHTNFKAEVYVLSKEEGGRHTPFFSNYRPQFYFRTTDVTGIIQLPDGVEMVMPGDNVEMTVELIAPIAIEEGTKFSIREGGRTVGAGVVASIQK.

Positions 10–205 constitute a tr-type G domain; it reads KTHANIGTIG…AVDDYIPTPE (196 aa). The interval 19 to 26 is G1; that stretch reads GHVDHGKT. 19 to 26 is a binding site for GTP; sequence GHVDHGKT. T26 lines the Mg(2+) pocket. The interval 61-65 is G2; that stretch reads GITIS. A G3 region spans residues 82-85; it reads DCPG. GTP-binding positions include 82–86 and 137–140; these read DCPGH and NKCD. Residues 137–140 are G4; it reads NKCD. A G5 region spans residues 175–177; that stretch reads SAL.

The protein belongs to the TRAFAC class translation factor GTPase superfamily. Classic translation factor GTPase family. EF-Tu/EF-1A subfamily. Monomer.

It is found in the cytoplasm. The catalysed reaction is GTP + H2O = GDP + phosphate + H(+). In terms of biological role, GTP hydrolase that promotes the GTP-dependent binding of aminoacyl-tRNA to the A-site of ribosomes during protein biosynthesis. This is Elongation factor Tu from Halalkalibacterium halodurans (strain ATCC BAA-125 / DSM 18197 / FERM 7344 / JCM 9153 / C-125) (Bacillus halodurans).